The primary structure comprises 468 residues: uncharacterized protein (468 aa).

A disordered region spans residues 1–22 (MVKRSSHRQVVLDEDDEENYNN). An RING-type zinc finger spans residues 85-123 (CPICTEALQRPFTTHCGHTYCYECLLNWLKESKSCPTCR). Residues 386 to 402 (DSLNSSSNNSPSHNNIH) are compositionally biased toward low complexity. A disordered region spans residues 386 to 468 (DSLNSSSNNS…TIQLDSDEES (83 aa)). Over residues 417-434 (IVTNGTGLRSSQSSSQNR) the composition is skewed to polar residues.

Its subcellular location is the nucleus. This is an uncharacterized protein from Schizosaccharomyces pombe (strain 972 / ATCC 24843) (Fission yeast).